The primary structure comprises 201 residues: uncharacterized protein (201 aa).

This sequence belongs to the mimivirus L885/R898 family.

This is an uncharacterized protein from Acanthamoeba polyphaga (Amoeba).